Consider the following 118-residue polypeptide: Probable dihydroneopterin aldolase (118 aa).

Substrate-binding positions include Glu-21, Tyr-53, and 72–73 (IE). The Proton donor/acceptor role is filled by Lys-98.

The protein belongs to the DHNA family.

The catalysed reaction is 7,8-dihydroneopterin = 6-hydroxymethyl-7,8-dihydropterin + glycolaldehyde. The protein operates within cofactor biosynthesis; tetrahydrofolate biosynthesis; 2-amino-4-hydroxy-6-hydroxymethyl-7,8-dihydropteridine diphosphate from 7,8-dihydroneopterin triphosphate: step 3/4. Catalyzes the conversion of 7,8-dihydroneopterin to 6-hydroxymethyl-7,8-dihydropterin. This is Probable dihydroneopterin aldolase (folB) from Synechocystis sp. (strain ATCC 27184 / PCC 6803 / Kazusa).